Here is a 216-residue protein sequence, read N- to C-terminus: Adenylate kinase (216 aa).

11–16 (GSGKGT) provides a ligand contact to ATP. The interval 31–60 (ATGDLFRKAIECGDELGDTVKSYMERGELV) is NMP. AMP contacts are provided by residues Thr-32, Arg-37, 58–60 (ELV), 86–89 (GFPR), and Gln-93. The tract at residues 127–163 (GRWVCRSCQSPYQSGCAEVTKGKCSRCQGGLYQRPDD) is LID. Residue Arg-128 coordinates ATP. Zn(2+) is bound by residues Cys-131, Cys-134, Cys-150, and Cys-153. Arg-160 and Arg-171 together coordinate AMP. ATP is bound at residue Ala-199.

Belongs to the adenylate kinase family. In terms of assembly, monomer.

It is found in the cytoplasm. It catalyses the reaction AMP + ATP = 2 ADP. Its pathway is purine metabolism; AMP biosynthesis via salvage pathway; AMP from ADP: step 1/1. Catalyzes the reversible transfer of the terminal phosphate group between ATP and AMP. Plays an important role in cellular energy homeostasis and in adenine nucleotide metabolism. The sequence is that of Adenylate kinase from Dehalococcoides mccartyi (strain CBDB1).